A 230-amino-acid polypeptide reads, in one-letter code: uncharacterized protein (230 aa).

Residues 1–11 (MPVPSVTVTTD) are compositionally biased toward polar residues. The disordered stretch occupies residues 1–88 (MPVPSVTVTT…TLKRPTSNSI (88 aa)). Residues 63–73 (DDQHRHSDVHS) are compositionally biased toward basic and acidic residues. The span at 79–88 (TLKRPTSNSI) shows a compositional bias: polar residues. The residue at position 106 (Ser106) is a Phosphoserine. Residues 156–179 (LKREDSRVSSTKKEHINDHTDMHS) show a composition bias toward basic and acidic residues. Residues 156–203 (LKREDSRVSSTKKEHINDHTDMHSTRSKVTTNSQGSSLEPNKLNMAVE) are disordered. A compositionally biased stretch (polar residues) spans 182–194 (SKVTTNSQGSSLE).

This is an uncharacterized protein from Saccharomyces cerevisiae (strain ATCC 204508 / S288c) (Baker's yeast).